The primary structure comprises 30 residues: Rothein 3.1 (30 aa).

A Leucine amide modification is found at leucine 30.

As to expression, expressed by the skin dorsal glands.

Its subcellular location is the secreted. In terms of biological role, lacks antimicrobial activity. Does not inhibit the formation of NO by neuronal nitric oxide. In Litoria rothii (Roth's tree frog), this protein is Rothein 3.1.